The primary structure comprises 380 residues: Putative 8-amino-7-oxononanoate synthase (380 aa).

Arg18 contributes to the substrate binding site. Gly106–Tyr107 lines the pyridoxal 5'-phosphate pocket. Substrate is bound at residue His131. Pyridoxal 5'-phosphate-binding positions include Ser179, Asp205 to His208, and Thr236 to Lys239. N6-(pyridoxal phosphate)lysine is present on Lys239. A substrate-binding site is contributed by Thr352.

The protein belongs to the class-II pyridoxal-phosphate-dependent aminotransferase family. BioF subfamily. In terms of assembly, homodimer. The cofactor is pyridoxal 5'-phosphate.

It carries out the reaction 6-carboxyhexanoyl-[ACP] + L-alanine + H(+) = (8S)-8-amino-7-oxononanoate + holo-[ACP] + CO2. The protein operates within cofactor biosynthesis; biotin biosynthesis. Its function is as follows. Catalyzes the decarboxylative condensation of pimeloyl-[acyl-carrier protein] and L-alanine to produce 8-amino-7-oxononanoate (AON), [acyl-carrier protein], and carbon dioxide. The protein is Putative 8-amino-7-oxononanoate synthase (bioF) of Neisseria meningitidis serogroup C (strain 053442).